A 122-amino-acid chain; its full sequence is Large ribosomal subunit protein uL14 (122 aa).

Belongs to the universal ribosomal protein uL14 family. As to quaternary structure, part of the 50S ribosomal subunit. Forms a cluster with proteins L3 and L19. In the 70S ribosome, L14 and L19 interact and together make contacts with the 16S rRNA in bridges B5 and B8.

In terms of biological role, binds to 23S rRNA. Forms part of two intersubunit bridges in the 70S ribosome. This chain is Large ribosomal subunit protein uL14, found in Dechloromonas aromatica (strain RCB).